Reading from the N-terminus, the 74-residue chain is U3-agatoxin-Ao1d (74 aa).

The first 20 residues, 1–20 (MKAAISLLLLSALLFVVIEA), serve as a signal peptide directing secretion. The propeptide occupies 21 to 34 (ITYEEGKELFQGER). 4 disulfides stabilise this stretch: Cys-37-Cys-53, Cys-44-Cys-58, Cys-52-Cys-68, and Cys-60-Cys-66. Serine amide is present on Ser-72.

Belongs to the neurotoxin 07 (Beta/delta-agtx) family. 02 (aga-3) subfamily. In terms of tissue distribution, expressed by the venom gland.

The protein localises to the secreted. Insecticidal neurotoxin that induces an irreversible spastic paralysis when injected into insects. Modifies presynaptic voltage-gated sodium channels (Nav), causing them to open at the normal resting potential of the nerve. This leads to spontaneous release of neurotransmitter and repetitive action potentials in motor neurons. This chain is U3-agatoxin-Ao1d, found in Agelena orientalis (Funnel-web spider).